Here is a 533-residue protein sequence, read N- to C-terminus: Acid-sensing ion channel 2 (533 aa).

A compositionally biased stretch (basic and acidic residues) spans 1-16 (MDLKEACGSEASRETE). The tract at residues 1-23 (MDLKEACGSEASRETESGGMGSL) is disordered. The Cytoplasmic segment spans residues 1 to 68 (MDLKEACGSE…STSRRLLWSA (68 aa)). Residues 69-89 (ALLASLVLLVLESTERLAYFL) form a helical membrane-spanning segment. The Extracellular segment spans residues 90–445 (SYPHVTSVDA…ETIEQKKAYE (356 aa)). 6 cysteine pairs are disulfide-bonded: C113–C214, C310–C385, C328–C381, C332–C379, C341–C363, and C343–C355. A glycan (N-linked (GlcNAc...) asparagine) is linked at N163. N-linked (GlcNAc...) asparagine glycosylation is found at N386 and N413. The chain crosses the membrane as a helical span at residues 446–466 (VAGLLGDIGGQMGLFIGASIL). Residues 462 to 464 (GAS) carry the GAS motif; ion selectivity filter motif. The Cytoplasmic segment spans residues 467–533 (TLLELFDYAY…TLGTLEEIAC (67 aa)).

It belongs to the amiloride-sensitive sodium channel (TC 1.A.6) family. ASIC2 subfamily. In terms of assembly, can form homotrimers; probably non-functional. Heterotrimer; could form functional heterotrimers producing channel with specific properties depending on their composition. Expressed in central nervous system.

The protein resides in the cell membrane. The catalysed reaction is Na(+)(in) = Na(+)(out). With respect to regulation, inhibited by the diuretic drug amiloride. Its function is as follows. Could form pH-gated heterotrimeric sodium channels that act as postsynaptic excitatory sensors in the nervous system, generating rapid, transient inward currents that fully desensitize upon extracellular acidification. This Danio rerio (Zebrafish) protein is Acid-sensing ion channel 2 (asic2).